The following is a 267-amino-acid chain: Zerumbone synthase (267 aa).

9-33 (LVTGGASGIGESIARLFIEHGAKIC) lines the NAD(+) pocket. A substrate-binding site is contributed by serine 142. Catalysis depends on tyrosine 155, which acts as the Proton acceptor.

It belongs to the short-chain dehydrogenases/reductases (SDR) family. Expressed in leaves, stems and rhizomes.

The catalysed reaction is 10-hydroxy-alpha-humulene + NAD(+) = zerumbone + NADH + H(+). In terms of biological role, catalyzes 8-hydroxy-alpha-humulene into zerumbone in presence of NAD. Also converts borneol to camphor in vitro. Zerumbone is a highly promising multi-anticancer agent. The sequence is that of Zerumbone synthase (ZSD1) from Zingiber zerumbet (Shampoo ginger).